We begin with the raw amino-acid sequence, 61 residues long: Large ribosomal subunit protein eL29y (61 aa).

Positions 1–61 (MAKSKNHTAH…KSGENAGVEE (61 aa)) are disordered. Residues 15–31 (KAHKNGIKKPRRHRHTP) show a composition bias toward basic residues.

Belongs to the eukaryotic ribosomal protein eL29 family.

This chain is Large ribosomal subunit protein eL29y (RPL29B), found in Arabidopsis thaliana (Mouse-ear cress).